We begin with the raw amino-acid sequence, 288 residues long: Solute carrier family 25 member 45 (288 aa).

Solcar repeat units follow at residues 1 to 83 (MPVE…TLLA), 97 to 191 (PSYT…LCRQ), and 199 to 286 (PSSA…LLRL). 6 helical membrane passes run 6 to 26 (FVAG…FDTV), 58 to 78 (GMSF…GVYS), 102 to 122 (IFIA…PFDL), 166 to 186 (GSWA…VTYE), 202 to 222 (ATVL…ATPF), and 266 to 286 (SARA…LLRL).

Belongs to the mitochondrial carrier (TC 2.A.29) family. As to expression, widely expressed, with highest levels in testis, liver and kidney and low levels in brain, including cortex, cerebellum, hippocampus and hypothalamus, and heart.

It is found in the mitochondrion inner membrane. This chain is Solute carrier family 25 member 45 (Slc25a45), found in Mus musculus (Mouse).